The chain runs to 700 residues: DNA topoisomerase 1 (700 aa).

A Toprim domain is found at 3–114; the sequence is KNLIIVESPA…TLPRIVFHEI (112 aa). Positions 9 and 83 each coordinate Mg(2+). The Topo IA-type catalytic domain maps to 130–553; that stretch reads NMHSVNAQQT…EFYYPFMRKI (424 aa). Positions 164–169 are interaction with DNA; the sequence is SAGRVQ. The O-(5'-phospho-DNA)-tyrosine intermediate role is filled by Y298. 3 C4-type zinc fingers span residues 573-599, 629-656, and 669-692; these read CPDC…FPKC, CPSC…YPKC, and CEEC…CLKC.

The protein belongs to the type IA topoisomerase family. Monomer. The cofactor is Mg(2+).

It carries out the reaction ATP-independent breakage of single-stranded DNA, followed by passage and rejoining.. Functionally, releases the supercoiling and torsional tension of DNA, which is introduced during the DNA replication and transcription, by transiently cleaving and rejoining one strand of the DNA duplex. Introduces a single-strand break via transesterification at a target site in duplex DNA. The scissile phosphodiester is attacked by the catalytic tyrosine of the enzyme, resulting in the formation of a DNA-(5'-phosphotyrosyl)-enzyme intermediate and the expulsion of a 3'-OH DNA strand. The free DNA strand then undergoes passage around the unbroken strand, thus removing DNA supercoils. Finally, in the religation step, the DNA 3'-OH attacks the covalent intermediate to expel the active-site tyrosine and restore the DNA phosphodiester backbone. The chain is DNA topoisomerase 1 from Campylobacter jejuni subsp. jejuni serotype O:2 (strain ATCC 700819 / NCTC 11168).